The primary structure comprises 476 residues: Bifunctional protein HldE (476 aa).

A ribokinase region spans residues 1–319 (MKVSLPAFEK…EALALHHGES (319 aa)). 195-198 (NMSE) contributes to the ATP binding site. D264 is a catalytic residue. The cytidylyltransferase stretch occupies residues 345 to 476 (MTNGCFDILH…AIIQNIMANQ (132 aa)).

In the N-terminal section; belongs to the carbohydrate kinase PfkB family. This sequence in the C-terminal section; belongs to the cytidylyltransferase family. Homodimer.

It carries out the reaction D-glycero-beta-D-manno-heptose 7-phosphate + ATP = D-glycero-beta-D-manno-heptose 1,7-bisphosphate + ADP + H(+). The enzyme catalyses D-glycero-beta-D-manno-heptose 1-phosphate + ATP + H(+) = ADP-D-glycero-beta-D-manno-heptose + diphosphate. The protein operates within nucleotide-sugar biosynthesis; ADP-L-glycero-beta-D-manno-heptose biosynthesis; ADP-L-glycero-beta-D-manno-heptose from D-glycero-beta-D-manno-heptose 7-phosphate: step 1/4. It participates in nucleotide-sugar biosynthesis; ADP-L-glycero-beta-D-manno-heptose biosynthesis; ADP-L-glycero-beta-D-manno-heptose from D-glycero-beta-D-manno-heptose 7-phosphate: step 3/4. Functionally, catalyzes the phosphorylation of D-glycero-D-manno-heptose 7-phosphate at the C-1 position to selectively form D-glycero-beta-D-manno-heptose-1,7-bisphosphate. In terms of biological role, catalyzes the ADP transfer from ATP to D-glycero-beta-D-manno-heptose 1-phosphate, yielding ADP-D-glycero-beta-D-manno-heptose. The chain is Bifunctional protein HldE from Shewanella sp. (strain W3-18-1).